Here is a 447-residue protein sequence, read N- to C-terminus: Probable arabinosyltransferase ARAD1 (447 aa).

At 1–6 the chain is on the cytoplasmic side; that stretch reads MARKSS. A helical; Signal-anchor for type II membrane protein membrane pass occupies residues 7-29; it reads LLKRAAIAVVSVIAIYVILNASV. Residues 30–447 are Lumenal-facing; the sequence is SRSLPSSSDL…TNQTGLITSI (418 aa). Positions 32–41 are enriched in low complexity; it reads SLPSSSDLPR. A disordered region spans residues 32-52; the sequence is SLPSSSDLPRQLIREDDDDEG. N-linked (GlcNAc...) asparagine glycans are attached at residues N427, N432, and N439.

This sequence belongs to the glycosyltransferase 47 family. In terms of assembly, homodimer and heterodimer with ARAD2. Expressed in root vasculature, cotyledons, leaves, stems, vascular tissue of sepals, petals and stamens, pollen grains, mature siliques and abscission region of seeds.

It localises to the golgi apparatus membrane. Functionally, probable arabinosyl transferase responsible for the polymerization of arabinose into the arabinan of arabinogalactan. May function as inverting enzyme using UDP-beta-L-arabinopyranoside. May be important for arabinan side chains of rhamnogalacturonan I (RG-I), a major component of pectins. Cell wall pectic arabinans are involved in thigmomorphogenesis response of inflorescence stems to mechanical stress. The chain is Probable arabinosyltransferase ARAD1 (ARAD1) from Arabidopsis thaliana (Mouse-ear cress).